The chain runs to 507 residues: Dihydrolipoyllysine-residue acetyltransferase component of pyruvate dehydrogenase complex, mitochondrial (507 aa).

In terms of domain architecture, Lipoyl-binding spans 77 to 153 (HNRVALPALS…PIGKLLCIIV (77 aa)). The residue at position 118 (lysine 118) is an N6-lipoyllysine. Disordered regions lie at residues 168–223 (DGAS…VSAS) and 248–270 (RILA…TQAV). Positions 221-258 (SASPFAKKLAAENGLDLSGVSGSGPGGRILASDLSQAP) constitute a Peripheral subunit-binding (PSBD) domain. Active-site residues include histidine 480 and aspartate 484.

It belongs to the 2-oxoacid dehydrogenase family. (R)-lipoate serves as cofactor.

It localises to the mitochondrion matrix. The catalysed reaction is N(6)-[(R)-dihydrolipoyl]-L-lysyl-[protein] + acetyl-CoA = N(6)-[(R)-S(8)-acetyldihydrolipoyl]-L-lysyl-[protein] + CoA. The pyruvate dehydrogenase complex catalyzes the overall conversion of pyruvate to acetyl-CoA and CO(2). It contains multiple copies of three enzymatic components: pyruvate dehydrogenase (E1), dihydrolipoamide acetyltransferase (E2) and lipoamide dehydrogenase (E3). This Caenorhabditis elegans protein is Dihydrolipoyllysine-residue acetyltransferase component of pyruvate dehydrogenase complex, mitochondrial.